The following is a 438-amino-acid chain: sn-glycerol-3-phosphate-binding periplasmic protein UgpB (438 aa).

A signal peptide spans 1 to 23 (MKPLRYTASALALGLALMANAQA). Sn-glycerol 3-phosphate-binding residues include Y65, E89, S144, S270, G307, Y346, and R397.

The protein belongs to the bacterial solute-binding protein 1 family. The complex is composed of two ATP-binding proteins (UgpC), two transmembrane proteins (UgpA and UgpE) and a solute-binding protein (UgpB).

The protein resides in the periplasm. In terms of biological role, part of the ABC transporter complex UgpBAEC involved in sn-glycerol-3-phosphate (G3P) import. Binds G3P. This chain is sn-glycerol-3-phosphate-binding periplasmic protein UgpB (ugpB), found in Escherichia coli O1:K1 / APEC.